We begin with the raw amino-acid sequence, 117 residues long: MSKQPRKQRKYIYEAPLHARRKMMSANLSRELREEYGRRSLPLRKGDKVEILRGDFRGHEGKVEKVDLKRYRVYVEGATIQKVDGTTVYFPLHPSNLRIVDLNLDDEKRIKILERKG.

Belongs to the universal ribosomal protein uL24 family. In terms of assembly, part of the 50S ribosomal subunit.

Functionally, one of two assembly initiator proteins, it binds directly to the 5'-end of the 23S rRNA, where it nucleates assembly of the 50S subunit. In terms of biological role, located at the polypeptide exit tunnel on the outside of the subunit. In Methanothermobacter thermautotrophicus (strain ATCC 29096 / DSM 1053 / JCM 10044 / NBRC 100330 / Delta H) (Methanobacterium thermoautotrophicum), this protein is Large ribosomal subunit protein uL24.